Consider the following 104-residue polypeptide: SOSS complex subunit C (104 aa).

Belongs to the SOSS-C family. As to quaternary structure, belongs to the multiprotein complex Integrator. Component of the SOSS complex, composed of SOSS-B (SOSS-B1/NABP2 or SOSS-B2/NABP1), SOSS-A/INTS3 and SOSS-C/INIP.

The protein resides in the nucleus. Its function is as follows. Component of the SOSS complex, a multiprotein complex that functions downstream of the MRN complex to promote DNA repair and G2/M checkpoint. The SOSS complex associates with single-stranded DNA at DNA lesions and influences diverse endpoints in the cellular DNA damage response including cell-cycle checkpoint activation, recombinational repair and maintenance of genomic stability. Required for efficient homologous recombination-dependent repair of double-strand breaks (DSBs). The chain is SOSS complex subunit C (INIP) from Taeniopygia guttata (Zebra finch).